A 320-amino-acid chain; its full sequence is Putative HTH-type transcriptional regulatory protein VNG_2112C (320 aa).

The HTH cro/C1-type domain maps to 132-189 (LADRREDERLSLGQLASELGVSRRTVSKYEDGMNASIEVAMRLEDLFGGELTAPVDVM). Positions 143–162 (LGQLASELGVSRRTVSKYED) form a DNA-binding region, H-T-H motif.

In Halobacterium salinarum (strain ATCC 700922 / JCM 11081 / NRC-1) (Halobacterium halobium), this protein is Putative HTH-type transcriptional regulatory protein VNG_2112C.